A 409-amino-acid chain; its full sequence is uncharacterized protein (409 aa).

The next 4 membrane-spanning stretches (helical) occupy residues 20–40 (ILTMLGVIIGIAAIIAIVSML), 283–303 (FALLLGGIASISLLVGGIGVM), 344–364 (IGGILGVLAGFGIAKLLTVIF), and 372–392 (IPAVVGALIFSMAVGIIFGLL).

This sequence belongs to the ABC-4 integral membrane protein family.

The protein resides in the cell membrane. This is an uncharacterized protein from Bacillus subtilis (strain 168).